The primary structure comprises 288 residues: Fe-S cluster assembly protein dre2 (288 aa).

An N-terminal SAM-like domain region spans residues 1–127; that stretch reads MSSSVLVLTS…LSRPNQVEAV (127 aa). The interval 128–177 is linker; it reads PIKLSNKNGQSASKNKILDFLKSDKENLISGDDDQELIDEDELLDESAHD. [2Fe-2S] cluster-binding residues include C185, C196, C199, and C201. Positions 185–201 are fe-S binding site A; sequence CKPEPGKKKRACKNCTC. Positions 244, 247, 255, and 258 each coordinate [4Fe-4S] cluster. Short sequence motifs (cx2C motif) lie at residues 244–247 and 255–258; these read CGNC and CSGC. Residues 244–258 are fe-S binding site B; that stretch reads CGNCYLGDAFRCSGC.

This sequence belongs to the anamorsin family. In terms of assembly, monomer. Interacts with tah18. Interacts with tim40. [2Fe-2S] cluster is required as a cofactor. The cofactor is [4Fe-4S] cluster.

The protein resides in the cytoplasm. It localises to the mitochondrion intermembrane space. Component of the cytosolic iron-sulfur (Fe-S) protein assembly (CIA) machinery required for the maturation of extramitochondrial Fe-S proteins. Part of an electron transfer chain functioning in an early step of cytosolic Fe-S biogenesis, facilitating the de novo assembly of a [4Fe-4S] cluster on the scaffold complex cfd1-nbp35. Electrons are transferred to dre2 from NADPH via the FAD- and FMN-containing protein tah18. Tah18-dre2 are also required for the assembly of the diferric tyrosyl radical cofactor of ribonucleotide reductase (RNR), probably by providing electrons for reduction during radical cofactor maturation in the catalytic small subunit suc22. The polypeptide is Fe-S cluster assembly protein dre2 (Schizosaccharomyces pombe (strain 972 / ATCC 24843) (Fission yeast)).